Reading from the N-terminus, the 271-residue chain is Formamidopyrimidine-DNA glycosylase (271 aa).

P2 functions as the Schiff-base intermediate with DNA in the catalytic mechanism. The Proton donor role is filled by E3. K57 functions as the Proton donor; for beta-elimination activity in the catalytic mechanism. DNA is bound by residues H90, R109, and K151. The FPG-type zinc-finger motif lies at H236–Q270. The Proton donor; for delta-elimination activity role is filled by R260.

This sequence belongs to the FPG family. In terms of assembly, monomer. It depends on Zn(2+) as a cofactor.

The enzyme catalyses Hydrolysis of DNA containing ring-opened 7-methylguanine residues, releasing 2,6-diamino-4-hydroxy-5-(N-methyl)formamidopyrimidine.. It catalyses the reaction 2'-deoxyribonucleotide-(2'-deoxyribose 5'-phosphate)-2'-deoxyribonucleotide-DNA = a 3'-end 2'-deoxyribonucleotide-(2,3-dehydro-2,3-deoxyribose 5'-phosphate)-DNA + a 5'-end 5'-phospho-2'-deoxyribonucleoside-DNA + H(+). In terms of biological role, involved in base excision repair of DNA damaged by oxidation or by mutagenic agents. Acts as a DNA glycosylase that recognizes and removes damaged bases. Has a preference for oxidized purines, such as 7,8-dihydro-8-oxoguanine (8-oxoG). Has AP (apurinic/apyrimidinic) lyase activity and introduces nicks in the DNA strand. Cleaves the DNA backbone by beta-delta elimination to generate a single-strand break at the site of the removed base with both 3'- and 5'-phosphates. The chain is Formamidopyrimidine-DNA glycosylase from Shewanella piezotolerans (strain WP3 / JCM 13877).